Reading from the N-terminus, the 150-residue chain is Copper transporter 3 (150 aa).

A run of 2 helical transmembrane segments spans residues glycine 50–leucine 70 and leucine 100–valine 120.

Belongs to the copper transporter (Ctr) (TC 1.A.56) family. SLC31A subfamily.

The protein resides in the membrane. Involved in the transport of copper. The polypeptide is Copper transporter 3 (COPT3) (Oryza sativa subsp. japonica (Rice)).